Reading from the N-terminus, the 389-residue chain is Glutamate 5-kinase (389 aa).

Residue Lys-17 coordinates ATP. Residues Ser-57, Asp-144, and Asn-156 each contribute to the substrate site. 176-177 (SD) serves as a coordination point for ATP. The PUA domain maps to 282-359 (AGEIHVDAGA…NEIETILGYV (78 aa)).

It belongs to the glutamate 5-kinase family.

It is found in the cytoplasm. It carries out the reaction L-glutamate + ATP = L-glutamyl 5-phosphate + ADP. The protein operates within amino-acid biosynthesis; L-proline biosynthesis; L-glutamate 5-semialdehyde from L-glutamate: step 1/2. Its function is as follows. Catalyzes the transfer of a phosphate group to glutamate to form L-glutamate 5-phosphate. The chain is Glutamate 5-kinase from Agrobacterium fabrum (strain C58 / ATCC 33970) (Agrobacterium tumefaciens (strain C58)).